A 107-amino-acid polypeptide reads, in one-letter code: Nucleoid-associated protein amb4104 (107 aa).

This sequence belongs to the YbaB/EbfC family. As to quaternary structure, homodimer.

The protein resides in the cytoplasm. It is found in the nucleoid. Functionally, binds to DNA and alters its conformation. May be involved in regulation of gene expression, nucleoid organization and DNA protection. The protein is Nucleoid-associated protein amb4104 of Paramagnetospirillum magneticum (strain ATCC 700264 / AMB-1) (Magnetospirillum magneticum).